We begin with the raw amino-acid sequence, 197 residues long: Ribonuclease HII (197 aa).

The RNase H type-2 domain maps to 9–197 (ELIAGVDEVG…APVKKALEQF (189 aa)). Positions 15, 16, and 107 each coordinate a divalent metal cation.

It belongs to the RNase HII family. Requires Mn(2+) as cofactor. Mg(2+) is required as a cofactor.

The protein resides in the cytoplasm. It catalyses the reaction Endonucleolytic cleavage to 5'-phosphomonoester.. Functionally, endonuclease that specifically degrades the RNA of RNA-DNA hybrids. The polypeptide is Ribonuclease HII (Haemophilus influenzae (strain PittGG)).